Here is a 432-residue protein sequence, read N- to C-terminus: Keratin, type I cytoskeletal 17 (432 aa).

Residues 1–24 are disordered; sequence MTTTIRQFTSSSSIKGSSGLGGGS. Residues 1 to 83 are head; sequence MTTTIRQFTS…GGVDGLLAGG (83 aa). 2 positions are modified to phosphoserine: S12 and S13. K15 participates in a covalent cross-link: Glycyl lysine isopeptide (Lys-Gly) (interchain with G-Cter in SUMO1); alternate. K15 participates in a covalent cross-link: Glycyl lysine isopeptide (Lys-Gly) (interchain with G-Cter in SUMO2); alternate. Phosphoserine is present on residues S25, S32, and S39. A Phosphoserine; by RPS6KA1 modification is found at S44. The interval 84–120 is coil 1A; that stretch reads EKATMQNLNDRLASYLDKVRALEEANTELEVKIRDWY. Residues 84–395 enclose the IF rod domain; the sequence is EKATMQNLND…RLLEGEDAHL (312 aa). T110 carries the phosphothreonine modification. The segment at 121 to 138 is linker 1; the sequence is QRQAPGPARDYSQYYRTI. Residues 139–230 are coil 1B; it reads EELQNKILTA…NHEEEMNALR (92 aa). A linker 12 region spans residues 231–250; the sequence is GQVGGEINVEMDAAPGVDLS. Residues 251-392 are coil 2; that stretch reads RILNEMRDQY…TYRRLLEGED (142 aa). A Glycyl lysine isopeptide (Lys-Gly) (interchain with G-Cter in SUMO2) cross-link involves residue K278. T279 carries the post-translational modification Phosphothreonine. S323 bears the Phosphoserine mark. A tail region spans residues 393–432; sequence AHLTQYKKEPVTTRQVRTIVEEVQDGKVISSREQVHQTTR. Residues K399, K400, and K419 each participate in a glycyl lysine isopeptide (Lys-Gly) (interchain with G-Cter in SUMO1); alternate cross-link. Glycyl lysine isopeptide (Lys-Gly) (interchain with G-Cter in SUMO2); alternate cross-links involve residues K399, K400, and K419.

Belongs to the intermediate filament family. Heterodimer of a type I and a type II keratin. KRT17 associates with KRT6 isomers (KRT6A or KRT6B). Interacts with TRADD and SFN. Post-translationally, phosphorylation at Ser-44 occurs in a growth- and stress-dependent fashion in skin keratinocytes, it has no effect on filament organization.

The protein resides in the cytoplasm. Its function is as follows. Type I keratin involved in the formation and maintenance of various skin appendages, specifically in determining shape and orientation of hair. Required for the correct growth of hair follicles, in particular for the persistence of the anagen (growth) state. Modulates the function of TNF-alpha in the specific context of hair cycling. Regulates protein synthesis and epithelial cell growth through binding to the adapter protein SFN and by stimulating Akt/mTOR pathway. Involved in tissue repair. May be a marker of basal cell differentiation in complex epithelia and therefore indicative of a certain type of epithelial 'stem cells'. Acts as a promoter of epithelial proliferation by acting a regulator of immune response in skin: promotes Th1/Th17-dominated immune environment contributing to the development of basaloid skin tumors. May act as an autoantigen in the immunopathogenesis of psoriasis, with certain peptide regions being a major target for autoreactive T-cells and hence causing their proliferation. The polypeptide is Keratin, type I cytoskeletal 17 (Pan troglodytes (Chimpanzee)).